Consider the following 260-residue polypeptide: Proteasome subunit alpha type-1 (260 aa).

The interval 240–260 (PRTTGGAAAAAAPGGAEPMQM) is disordered. Positions 244–260 (GGAAAAAAPGGAEPMQM) are enriched in low complexity.

This sequence belongs to the peptidase T1A family. In terms of assembly, the 26S proteasome consists of a 20S proteasome core and two 19S regulatory subunits. The 20S proteasome core is composed of 28 subunits that are arranged in four stacked rings, resulting in a barrel-shaped structure. The two end rings are each formed by seven alpha subunits, and the two central rings are each formed by seven beta subunits. The catalytic chamber with the active sites is on the inside of the barrel.

The protein localises to the cytoplasm. Its subcellular location is the nucleus. In terms of biological role, the proteasome is a multicatalytic proteinase complex which is characterized by its ability to cleave peptides with Arg, Phe, Tyr, Leu, and Glu adjacent to the leaving group at neutral or slightly basic pH. The proteasome has an ATP-dependent proteolytic activity. This chain is Proteasome subunit alpha type-1 (pas-6), found in Caenorhabditis elegans.